The primary structure comprises 157 residues: 6,7-dimethyl-8-ribityllumazine synthase (157 aa).

5-amino-6-(D-ribitylamino)uracil-binding positions include Phe-24, 58-60, and 82-84; these read SFE and AVI. 87 to 88 is a (2S)-2-hydroxy-3-oxobutyl phosphate binding site; the sequence is ET. The active-site Proton donor is His-90. Phe-115 contacts 5-amino-6-(D-ribitylamino)uracil. (2S)-2-hydroxy-3-oxobutyl phosphate is bound at residue Arg-129.

The protein belongs to the DMRL synthase family.

It catalyses the reaction (2S)-2-hydroxy-3-oxobutyl phosphate + 5-amino-6-(D-ribitylamino)uracil = 6,7-dimethyl-8-(1-D-ribityl)lumazine + phosphate + 2 H2O + H(+). It functions in the pathway cofactor biosynthesis; riboflavin biosynthesis; riboflavin from 2-hydroxy-3-oxobutyl phosphate and 5-amino-6-(D-ribitylamino)uracil: step 1/2. In terms of biological role, catalyzes the formation of 6,7-dimethyl-8-ribityllumazine by condensation of 5-amino-6-(D-ribitylamino)uracil with 3,4-dihydroxy-2-butanone 4-phosphate. This is the penultimate step in the biosynthesis of riboflavin. This is 6,7-dimethyl-8-ribityllumazine synthase from Thermus thermophilus (strain ATCC BAA-163 / DSM 7039 / HB27).